The chain runs to 533 residues: Kelch-like protein 33 (533 aa).

Kelch repeat units follow at residues 210 to 258, 273 to 322, 323 to 369, 371 to 418, 419 to 465, and 467 to 514; these read ALVV…ALPA, ELYV…ALDG, KLYA…ILEG, LYVS…ALGG, RLYV…VLQG, and LLVL…ILTL.

This Homo sapiens (Human) protein is Kelch-like protein 33 (KLHL33).